The chain runs to 301 residues: Diaminopimelate epimerase (301 aa).

Positions 15, 47, and 67 each coordinate substrate. Cysteine 76 serves as the catalytic Proton donor. Residues 77-78 (GN), asparagine 163, asparagine 197, and 215-216 (ER) each bind substrate. Cysteine 224 serves as the catalytic Proton acceptor. Residue 225–226 (GS) participates in substrate binding. The tract at residues 280-301 (SGSLDPSTGLWSRDGTQEAGAR) is disordered.

The protein belongs to the diaminopimelate epimerase family. Homodimer.

It is found in the cytoplasm. It carries out the reaction (2S,6S)-2,6-diaminopimelate = meso-2,6-diaminopimelate. Its pathway is amino-acid biosynthesis; L-lysine biosynthesis via DAP pathway; DL-2,6-diaminopimelate from LL-2,6-diaminopimelate: step 1/1. Functionally, catalyzes the stereoinversion of LL-2,6-diaminopimelate (L,L-DAP) to meso-diaminopimelate (meso-DAP), a precursor of L-lysine and an essential component of the bacterial peptidoglycan. The chain is Diaminopimelate epimerase from Rhizobium leguminosarum bv. trifolii (strain WSM2304).